Reading from the N-terminus, the 280-residue chain is 3-phenylpropionate-dihydrodiol/cinnamic acid-dihydrodiol dehydrogenase (280 aa).

Residue serine 143 participates in substrate binding. Tyrosine 156 functions as the Proton acceptor in the catalytic mechanism.

It belongs to the short-chain dehydrogenases/reductases (SDR) family.

It carries out the reaction 3-(cis-5,6-dihydroxycyclohexa-1,3-dien-1-yl)propanoate + NAD(+) = 3-(2,3-dihydroxyphenyl)propanoate + NADH + H(+). The catalysed reaction is (2E)-3-(cis-5,6-dihydroxycyclohexa-1,3-dien-1-yl)prop-2-enoate + NAD(+) = (2E)-3-(2,3-dihydroxyphenyl)prop-2-enoate + NADH + H(+). The protein operates within aromatic compound metabolism; 3-phenylpropanoate degradation. Functionally, converts 3-phenylpropionate-dihydrodiol (PP-dihydrodiol) and cinnamic acid-dihydrodiol (CI-dihydrodiol) into 3-(2,3-dihydroxylphenyl)propanoic acid (DHPP) and 2,3-dihydroxicinnamic acid (DHCI), respectively. The chain is 3-phenylpropionate-dihydrodiol/cinnamic acid-dihydrodiol dehydrogenase from Photorhabdus laumondii subsp. laumondii (strain DSM 15139 / CIP 105565 / TT01) (Photorhabdus luminescens subsp. laumondii).